A 475-amino-acid polypeptide reads, in one-letter code: UDP-N-acetylmuramate--L-alanine ligase (475 aa).

112–118 (GTHGKTT) provides a ligand contact to ATP.

This sequence belongs to the MurCDEF family.

Its subcellular location is the cytoplasm. It catalyses the reaction UDP-N-acetyl-alpha-D-muramate + L-alanine + ATP = UDP-N-acetyl-alpha-D-muramoyl-L-alanine + ADP + phosphate + H(+). It functions in the pathway cell wall biogenesis; peptidoglycan biosynthesis. Cell wall formation. The chain is UDP-N-acetylmuramate--L-alanine ligase from Methylobacillus flagellatus (strain ATCC 51484 / DSM 6875 / VKM B-1610 / KT).